The chain runs to 354 residues: Selenide, water dikinase (354 aa).

Residue Cys23 is part of the active site. Residues Lys26 and 54-56 (TSD) each bind ATP. Asp57 is a Mg(2+) binding site. ATP is bound by residues Asp74, Asp97, and 145–147 (GHS). Asp97 contributes to the Mg(2+) binding site. Asp233 provides a ligand contact to Mg(2+).

Belongs to the selenophosphate synthase 1 family. Class I subfamily. As to quaternary structure, homodimer. The cofactor is Mg(2+).

The enzyme catalyses hydrogenselenide + ATP + H2O = selenophosphate + AMP + phosphate + 2 H(+). Functionally, synthesizes selenophosphate from selenide and ATP. This chain is Selenide, water dikinase, found in Burkholderia cenocepacia (strain ATCC BAA-245 / DSM 16553 / LMG 16656 / NCTC 13227 / J2315 / CF5610) (Burkholderia cepacia (strain J2315)).